The primary structure comprises 248 residues: Small ribosomal subunit protein uS3 (248 aa).

The region spanning 38 to 106 (IREFLSEGLE…QVQLNILEVK (69 aa)) is the KH type-2 domain. Residues 214–229 (SLMNARDERPSRGGRR) show a composition bias toward basic and acidic residues. Positions 214 to 248 (SLMNARDERPSRGGRRERPRRGGARRQRAEKKQEG) are disordered. The span at 230 to 242 (ERPRRGGARRQRA) shows a compositional bias: basic residues.

This sequence belongs to the universal ribosomal protein uS3 family. Part of the 30S ribosomal subunit. Forms a tight complex with proteins S10 and S14.

Its function is as follows. Binds the lower part of the 30S subunit head. Binds mRNA in the 70S ribosome, positioning it for translation. The chain is Small ribosomal subunit protein uS3 from Corynebacterium urealyticum (strain ATCC 43042 / DSM 7109).